We begin with the raw amino-acid sequence, 238 residues long: Endothelial protein C receptor (238 aa).

Positions 1–17 are cleaved as a signal peptide; it reads MLTTLLPILLLSGWAFC. At 18-210 the chain is on the extracellular side; the sequence is SQDASDGLQR…GSQTSRSYTS (193 aa). N47, N64, N136, and N172 each carry an N-linked (GlcNAc...) asparagine glycan. C118 and C186 are oxidised to a cystine. A helical transmembrane segment spans residues 211–231; it reads LVLGVLVGSFIIAGVAVGIFL. The Cytoplasmic segment spans residues 232-238; sequence CTGGRRC.

Post-translationally, N-glycosylated. In terms of processing, a soluble form exists; probably released by a metalloprotease. Seems to have the same activity as the membrane-bound form. In terms of tissue distribution, expressed strongly in the endothelial cells of arteries and veins in heart and lung, less intensely in capillaries in the lung and skin, and not at all in the endothelium of small vessels of the liver and kidney.

The protein localises to the membrane. In terms of biological role, binds activated protein C. Enhances protein C activation by the thrombin-thrombomodulin complex; plays a role in the protein C pathway controlling blood coagulation. In Homo sapiens (Human), this protein is Endothelial protein C receptor (PROCR).